The sequence spans 167 residues: Photosystem I assembly protein Ycf3 (167 aa).

TPR repeat units follow at residues 35–68 (AFSY…ETDA), 72–105 (SYIL…NPSL), and 120–153 (GEQA…APTN).

The protein belongs to the Ycf3 family.

The protein resides in the plastid. The protein localises to the chloroplast thylakoid membrane. Functionally, essential for the assembly of the photosystem I (PSI) complex. May act as a chaperone-like factor to guide the assembly of the PSI subunits. The polypeptide is Photosystem I assembly protein Ycf3 (Chlorella vulgaris (Green alga)).